The primary structure comprises 195 residues: Glycerol-3-phosphate acyltransferase (195 aa).

The next 5 membrane-spanning stretches (helical) occupy residues Glu-3–Thr-23, Gly-51–Gly-71, Leu-79–Phe-99, Ile-111–Val-131, and Leu-153–Val-173.

The protein belongs to the PlsY family. In terms of assembly, probably interacts with PlsX.

The protein localises to the cell membrane. It catalyses the reaction an acyl phosphate + sn-glycerol 3-phosphate = a 1-acyl-sn-glycero-3-phosphate + phosphate. Its pathway is lipid metabolism; phospholipid metabolism. Functionally, catalyzes the transfer of an acyl group from acyl-phosphate (acyl-PO(4)) to glycerol-3-phosphate (G3P) to form lysophosphatidic acid (LPA). This enzyme utilizes acyl-phosphate as fatty acyl donor, but not acyl-CoA or acyl-ACP. This is Glycerol-3-phosphate acyltransferase from Syntrophomonas wolfei subsp. wolfei (strain DSM 2245B / Goettingen).